A 126-amino-acid chain; its full sequence is Small ribosomal subunit protein uS12c (126 aa).

Belongs to the universal ribosomal protein uS12 family. In terms of assembly, part of the 30S ribosomal subunit.

The protein resides in the plastid. It localises to the chloroplast. Functionally, with S4 and S5 plays an important role in translational accuracy. Located at the interface of the 30S and 50S subunits. This Trieres chinensis (Marine centric diatom) protein is Small ribosomal subunit protein uS12c (rps12).